The chain runs to 318 residues: tRNA U34 carboxymethyltransferase (318 aa).

Carboxy-S-adenosyl-L-methionine contacts are provided by residues Lys-88, Trp-102, Lys-107, Gly-126, 176–177, Met-192, Tyr-196, and Arg-311; that span reads LE.

The protein belongs to the class I-like SAM-binding methyltransferase superfamily. CmoB family. As to quaternary structure, homotetramer.

The enzyme catalyses carboxy-S-adenosyl-L-methionine + 5-hydroxyuridine(34) in tRNA = 5-carboxymethoxyuridine(34) in tRNA + S-adenosyl-L-homocysteine + H(+). In terms of biological role, catalyzes carboxymethyl transfer from carboxy-S-adenosyl-L-methionine (Cx-SAM) to 5-hydroxyuridine (ho5U) to form 5-carboxymethoxyuridine (cmo5U) at position 34 in tRNAs. This Pseudomonas putida (strain GB-1) protein is tRNA U34 carboxymethyltransferase.